The sequence spans 277 residues: 3-methyl-2-oxobutanoate hydroxymethyltransferase (277 aa).

2 residues coordinate Mg(2+): aspartate 53 and aspartate 96. 3-methyl-2-oxobutanoate contacts are provided by residues 53 to 54 (DS), aspartate 96, and lysine 126. Glutamate 128 is a Mg(2+) binding site. Glutamate 195 (proton acceptor) is an active-site residue.

The protein belongs to the PanB family. In terms of assembly, homodecamer; pentamer of dimers. It depends on Mg(2+) as a cofactor.

The protein resides in the cytoplasm. It carries out the reaction 3-methyl-2-oxobutanoate + (6R)-5,10-methylene-5,6,7,8-tetrahydrofolate + H2O = 2-dehydropantoate + (6S)-5,6,7,8-tetrahydrofolate. It functions in the pathway cofactor biosynthesis; (R)-pantothenate biosynthesis; (R)-pantoate from 3-methyl-2-oxobutanoate: step 1/2. Functionally, catalyzes the reversible reaction in which hydroxymethyl group from 5,10-methylenetetrahydrofolate is transferred onto alpha-ketoisovalerate to form ketopantoate. The polypeptide is 3-methyl-2-oxobutanoate hydroxymethyltransferase (Pelodictyon phaeoclathratiforme (strain DSM 5477 / BU-1)).